The chain runs to 119 residues: UPF0102 protein Pmen_0910 (119 aa).

The protein belongs to the UPF0102 family.

This chain is UPF0102 protein Pmen_0910, found in Ectopseudomonas mendocina (strain ymp) (Pseudomonas mendocina).